The following is a 112-amino-acid chain: Large ribosomal subunit protein P1w (112 aa).

Residues 85–112 (AAAPAAEEKKKDEPAEESDGDLGFGLFD) are disordered. Residue S102 is modified to Phosphoserine.

The protein belongs to the eukaryotic ribosomal protein P1/P2 family. As to quaternary structure, P1 and P2 exist as dimers at the large ribosomal subunit.

Its function is as follows. Plays an important role in the elongation step of protein synthesis. This is Large ribosomal subunit protein P1w (RPP1A) from Arabidopsis thaliana (Mouse-ear cress).